Here is a 300-residue protein sequence, read N- to C-terminus: UDP-N-acetylenolpyruvoylglucosamine reductase (300 aa).

One can recognise an FAD-binding PCMH-type domain in the interval 27 to 216 (RVGGPADVIF…TERREKTQPI (190 aa)). The active site involves R172. S223 functions as the Proton donor in the catalytic mechanism. E293 is a catalytic residue.

It belongs to the MurB family. FAD is required as a cofactor.

It is found in the cytoplasm. It catalyses the reaction UDP-N-acetyl-alpha-D-muramate + NADP(+) = UDP-N-acetyl-3-O-(1-carboxyvinyl)-alpha-D-glucosamine + NADPH + H(+). It functions in the pathway cell wall biogenesis; peptidoglycan biosynthesis. Cell wall formation. The chain is UDP-N-acetylenolpyruvoylglucosamine reductase from Phenylobacterium zucineum (strain HLK1).